Reading from the N-terminus, the 249-residue chain is Putative [LysW]-aminoadipate/[LysW]-glutamate kinase (249 aa).

Residues arginine 63 and asparagine 166 each coordinate substrate.

Belongs to the acetylglutamate kinase family. LysZ subfamily.

The protein resides in the cytoplasm. It catalyses the reaction [amino-group carrier protein]-C-terminal-N-(1,4-dicarboxybutan-1-yl)-L-glutamine + ATP = [amino-group carrier protein]-C-terminal-N-(1-carboxy-5-phosphooxy-5-oxopentan-1-yl)-L-glutamine + ADP. It carries out the reaction [amino-group carrier protein]-C-terminal-gamma-(L-glutamyl)-L-glutamate + ATP = [amino-group carrier protein]-C-terminal-gamma-(5-phospho-L-glutamyl)-L-glutamate + ADP. It functions in the pathway amino-acid biosynthesis; L-lysine biosynthesis via AAA pathway; L-lysine from L-alpha-aminoadipate (Thermus route): step 2/5. It participates in amino-acid biosynthesis; L-arginine biosynthesis. In terms of biological role, involved in both the arginine and lysine biosynthetic pathways. Phosphorylates the LysW-bound precursors glutamate (for arginine biosynthesis), respectively alpha-aminoadipate (for lysine biosynthesis). The sequence is that of Putative [LysW]-aminoadipate/[LysW]-glutamate kinase from Pyrococcus furiosus (strain ATCC 43587 / DSM 3638 / JCM 8422 / Vc1).